Reading from the N-terminus, the 710-residue chain is multidrug resistance regulator 2 (710 aa).

The segment at residues 11–37 (CDACRSRKIKCNRQTPCASCHKSKRDC) is a DNA-binding region (zn(2)-C6 fungal-type). 2 consecutive transmembrane segments (helical) span residues 475-495 (DLVI…LYLF) and 525-545 (LFLA…TNFL).

It is found in the nucleus. Its subcellular location is the membrane. Its function is as follows. Transcription factor that controls the expression of CDR1, the major multidrug efflux pump. Required for yeast cell adherence to silicone substrate and plays a role in virulence. This chain is multidrug resistance regulator 2, found in Candida albicans (strain SC5314 / ATCC MYA-2876) (Yeast).